The primary structure comprises 490 residues: Betaine aldehyde dehydrogenase (490 aa).

3 residues coordinate K(+): Ser-26, Ile-27, and Asp-93. Residue 150-152 (GAW) coordinates NAD(+). Residue Lys-162 is the Charge relay system of the active site. NAD(+)-binding positions include 176–179 (KPSE) and 230–233 (GVET). Leu-246 is a binding site for K(+). The Proton acceptor role is filled by Glu-252. Positions 254, 286, and 387 each coordinate NAD(+). Cys-286 acts as the Nucleophile in catalysis. Position 286 is a cysteine sulfenic acid (-SOH) (Cys-286). Residues Lys-457 and Gly-460 each contribute to the K(+) site. Residue Glu-464 is the Charge relay system of the active site.

Belongs to the aldehyde dehydrogenase family. As to quaternary structure, dimer of dimers. K(+) is required as a cofactor.

The enzyme catalyses betaine aldehyde + NAD(+) + H2O = glycine betaine + NADH + 2 H(+). It functions in the pathway amine and polyamine biosynthesis; betaine biosynthesis via choline pathway; betaine from betaine aldehyde: step 1/1. Involved in the biosynthesis of the osmoprotectant glycine betaine. Catalyzes the irreversible oxidation of betaine aldehyde to the corresponding acid. In Acinetobacter baumannii (strain ACICU), this protein is Betaine aldehyde dehydrogenase.